Here is a 692-residue protein sequence, read N- to C-terminus: MAREFSLENTRNIGIMAHIDAGKTTATERILYYTGRIHKIGETHEGASQMDWMEQEQERGITITSAATTAQWKGHRVNIIDTPGHVDFTVEVERSLRVLDGAVAVLDAQSGVEPQTETVWRQATTYGVPRIVFVNKMDKIGADFLYSVGTIHDRLQANAHPIQLPIGAEDEFNGIIDLVEECAYMYGNDLGTDIQRVEIPEEHKELAEEYRGKLIEAVAELDEEMMMKYLEGEEITVEELKAGIRKATTSVEFFPVICGSAFKNKGVQILLDAVIDYLPSPLDVPAIKGTLPDTDEEVERKSSDEEPFSALAFKIMTDPYVGKLTFFRVYSGVLNSGSYVKNSTKGKRERVGRILQMHANSREEISTVYAGDIAAAVGLKDTTTGDTLCDEKSLVILESMEFPEPVISVAIEPKSKADQDKMGTALSKLSEEDPTFRAHTDQETGQTIIAGMGELHLDIIVDRMRREFKVEANVGAPQVAYRETFRAAAKVEGKFARQSGGRGQFGHVWIEFEPNEEGKGFEFENKIVGGVVPREYIPAVGAGLEDALKNGVLAGYPVVDIKAALVDGSYHDVDSSEMAFKIAASMALKAAVSKCNPVILEPMMKVEVVIPEEYMGDIMGDVTSRRGRVEGMEARGNAQVVRAMVPLSEMFGYATSLRSNTQGRGTFSMVFDHYEEVPKSVSEEIIKKNKGE.

The region spanning 8 to 282 (ENTRNIGIMA…AVIDYLPSPL (275 aa)) is the tr-type G domain. GTP is bound by residues 17–24 (AHIDAGKT), 81–85 (DTPGH), and 135–138 (NKMD).

It belongs to the TRAFAC class translation factor GTPase superfamily. Classic translation factor GTPase family. EF-G/EF-2 subfamily.

The protein localises to the cytoplasm. In terms of biological role, catalyzes the GTP-dependent ribosomal translocation step during translation elongation. During this step, the ribosome changes from the pre-translocational (PRE) to the post-translocational (POST) state as the newly formed A-site-bound peptidyl-tRNA and P-site-bound deacylated tRNA move to the P and E sites, respectively. Catalyzes the coordinated movement of the two tRNA molecules, the mRNA and conformational changes in the ribosome. The sequence is that of Elongation factor G from Bacillus cereus (strain ZK / E33L).